The following is a 497-amino-acid chain: Glycerol kinase (497 aa).

Residue Thr11 coordinates ADP. 3 residues coordinate ATP: Thr11, Thr12, and Ser13. A sn-glycerol 3-phosphate-binding site is contributed by Thr11. Arg15 serves as a coordination point for ADP. The sn-glycerol 3-phosphate site is built by Arg81, Glu82, Tyr133, and Asp242. Arg81, Glu82, Tyr133, Asp242, and Gln243 together coordinate glycerol. Residues Thr264 and Gly306 each coordinate ADP. Thr264, Gly306, Gln310, and Gly407 together coordinate ATP. The ADP site is built by Gly407 and Asn411.

The protein belongs to the FGGY kinase family.

It catalyses the reaction glycerol + ATP = sn-glycerol 3-phosphate + ADP + H(+). The protein operates within polyol metabolism; glycerol degradation via glycerol kinase pathway; sn-glycerol 3-phosphate from glycerol: step 1/1. Inhibited by fructose 1,6-bisphosphate (FBP). In terms of biological role, key enzyme in the regulation of glycerol uptake and metabolism. Catalyzes the phosphorylation of glycerol to yield sn-glycerol 3-phosphate. The sequence is that of Glycerol kinase from Alcanivorax borkumensis (strain ATCC 700651 / DSM 11573 / NCIMB 13689 / SK2).